Reading from the N-terminus, the 459-residue chain is Argininosuccinate lyase (459 aa).

It belongs to the lyase 1 family. Argininosuccinate lyase subfamily.

The protein resides in the cytoplasm. The enzyme catalyses 2-(N(omega)-L-arginino)succinate = fumarate + L-arginine. The protein operates within amino-acid biosynthesis; L-arginine biosynthesis; L-arginine from L-ornithine and carbamoyl phosphate: step 3/3. The polypeptide is Argininosuccinate lyase (Geobacillus sp. (strain WCH70)).